Reading from the N-terminus, the 670-residue chain is uncharacterized protein (670 aa).

10 helical membrane-spanning segments follow: residues 23-42 (YALR…YYLN), 47-69 (YWAM…SKSL), 76-98 (LLGA…FFLL), 118-140 (VAYA…VNIT), 153-170 (VCEV…MMIL), 381-403 (QWDA…SAVA), 410-432 (SLLM…GLMV), 437-454 (LWQF…MQLL), 461-483 (FAAL…NPPV), and 493-510 (NLAK…FAIL).

This sequence belongs to the aromatic acid exporter ArAE (TC 2.A.85) family.

The protein localises to the cell membrane. This is an uncharacterized protein from Escherichia coli O157:H7.